A 321-amino-acid chain; its full sequence is Cytochrome f (321 aa).

The signal sequence occupies residues 1-38 (MKKNFYTISKTMSRSLKLILFSVFIGFSIFLIPQPTWA). The heme site is built by Y39, C59, C62, and H63. A helical membrane pass occupies residues 288 to 308 (VIGMIIFFIGVGLSQIMLVLK).

This sequence belongs to the cytochrome f family. In terms of assembly, the 4 large subunits of the cytochrome b6-f complex are cytochrome b6, subunit IV (17 kDa polypeptide, PetD), cytochrome f and the Rieske protein, while the 4 small subunits are PetG, PetL, PetM and PetN. The complex functions as a dimer. Heme serves as cofactor.

The protein localises to the cellular thylakoid membrane. In terms of biological role, component of the cytochrome b6-f complex, which mediates electron transfer between photosystem II (PSII) and photosystem I (PSI), cyclic electron flow around PSI, and state transitions. The chain is Cytochrome f from Prochlorococcus marinus (strain NATL2A).